Reading from the N-terminus, the 341-residue chain is Glyceraldehyde-3-phosphate dehydrogenase, cytosolic (341 aa).

NAD(+) contacts are provided by residues 15-16 (RI), Asp-37, and Arg-84. D-glyceraldehyde 3-phosphate-binding positions include 155 to 157 (SCT), Thr-186, 215 to 216 (TG), and Arg-238. Cys-156 acts as the Nucleophile in catalysis. Asn-320 contacts NAD(+).

It belongs to the glyceraldehyde-3-phosphate dehydrogenase family. As to quaternary structure, homotetramer.

Its subcellular location is the cytoplasm. It carries out the reaction D-glyceraldehyde 3-phosphate + phosphate + NAD(+) = (2R)-3-phospho-glyceroyl phosphate + NADH + H(+). It participates in carbohydrate degradation; glycolysis; pyruvate from D-glyceraldehyde 3-phosphate: step 1/5. Its function is as follows. Key enzyme in glycolysis that catalyzes the first step of the pathway by converting D-glyceraldehyde 3-phosphate (G3P) into 3-phospho-D-glyceroyl phosphate. Essential for the maintenance of cellular ATP levels and carbohydrate metabolism. This is Glyceraldehyde-3-phosphate dehydrogenase, cytosolic (GAPC) from Magnolia liliiflora (Mulan magnolia).